The following is a 288-amino-acid chain: Shikimate dehydrogenase (NADP(+)) (288 aa).

Shikimate is bound by residues 18-20 (SRS) and T65. Catalysis depends on K69, which acts as the Proton acceptor. E81 lines the NADP(+) pocket. Residues N90 and D106 each contribute to the shikimate site. Residues 131–135 (GAGGA), 155–160 (NRTLAK), and M223 contribute to the NADP(+) site. Y225 serves as a coordination point for shikimate. G246 lines the NADP(+) pocket.

This sequence belongs to the shikimate dehydrogenase family. In terms of assembly, homodimer.

The enzyme catalyses shikimate + NADP(+) = 3-dehydroshikimate + NADPH + H(+). The protein operates within metabolic intermediate biosynthesis; chorismate biosynthesis; chorismate from D-erythrose 4-phosphate and phosphoenolpyruvate: step 4/7. In terms of biological role, involved in the biosynthesis of the chorismate, which leads to the biosynthesis of aromatic amino acids. Catalyzes the reversible NADPH linked reduction of 3-dehydroshikimate (DHSA) to yield shikimate (SA). The sequence is that of Shikimate dehydrogenase (NADP(+)) from Verminephrobacter eiseniae (strain EF01-2).